Here is a 395-residue protein sequence, read N- to C-terminus: Putative 8-amino-7-oxononanoate synthase (395 aa).

Arginine 23 lines the substrate pocket. 110–111 (GY) is a pyridoxal 5'-phosphate binding site. Histidine 135 contacts substrate. Pyridoxal 5'-phosphate is bound by residues serine 182, 207-210 (DEAH), and 239-242 (TFSK). Residue lysine 242 is modified to N6-(pyridoxal phosphate)lysine. Substrate is bound at residue threonine 356.

The protein belongs to the class-II pyridoxal-phosphate-dependent aminotransferase family. BioF subfamily. In terms of assembly, homodimer. It depends on pyridoxal 5'-phosphate as a cofactor.

It carries out the reaction 6-carboxyhexanoyl-[ACP] + L-alanine + H(+) = (8S)-8-amino-7-oxononanoate + holo-[ACP] + CO2. It participates in cofactor biosynthesis; biotin biosynthesis. Catalyzes the decarboxylative condensation of pimeloyl-[acyl-carrier protein] and L-alanine to produce 8-amino-7-oxononanoate (AON), [acyl-carrier protein], and carbon dioxide. This chain is Putative 8-amino-7-oxononanoate synthase (bioF), found in Bacillus cereus (strain ZK / E33L).